We begin with the raw amino-acid sequence, 127 residues long: MNIPDNLRYTKDHEWIKLLEDGLTALVGITDFAQSELGDIVFVETKPVGTKVAAHGTFGTVEAVKTVADLFAPAAGEIVEVNAGLDDAAIVNSDPYNEGWIVKMKLDNPADVEALLSPADYSALIGE.

The Lipoyl-binding domain occupies 24–105 (TALVGITDFA…YNEGWIVKMK (82 aa)). Residue lysine 65 is modified to N6-lipoyllysine.

This sequence belongs to the GcvH family. The glycine cleavage system is composed of four proteins: P, T, L and H. The cofactor is (R)-lipoate.

Functionally, the glycine cleavage system catalyzes the degradation of glycine. The H protein shuttles the methylamine group of glycine from the P protein to the T protein. The chain is Glycine cleavage system H protein from Chlorobaculum tepidum (strain ATCC 49652 / DSM 12025 / NBRC 103806 / TLS) (Chlorobium tepidum).